The following is a 171-amino-acid chain: UPF0725 protein At3g25080 (171 aa).

The protein belongs to the UPF0725 (EMB2204) family.

The chain is UPF0725 protein At3g25080 from Arabidopsis thaliana (Mouse-ear cress).